Here is a 302-residue protein sequence, read N- to C-terminus: Glutaminase (302 aa).

Substrate is bound by residues Ser61, Asn111, Glu155, Asn162, Tyr186, Tyr238, and Val256.

This sequence belongs to the glutaminase family. In terms of assembly, homotetramer.

It carries out the reaction L-glutamine + H2O = L-glutamate + NH4(+). In Pseudomonas paraeruginosa (strain DSM 24068 / PA7) (Pseudomonas aeruginosa (strain PA7)), this protein is Glutaminase.